We begin with the raw amino-acid sequence, 311 residues long: Beta-lactamase (311 aa).

The tat-type signal signal peptide spans 1–34 (MRLTQAPPSRRTLMTLGAGATMAALLPAGGAAYA). The Acyl-ester intermediate role is filled by serine 87. Position 255–257 (255–257 (KTG)) interacts with substrate.

The protein belongs to the class-A beta-lactamase family. In terms of processing, predicted to be exported by the Tat system. The position of the signal peptide cleavage has not been experimentally proven.

The enzyme catalyses a beta-lactam + H2O = a substituted beta-amino acid. In Kitasatospora aureofaciens (Streptomyces aureofaciens), this protein is Beta-lactamase (bla).